The sequence spans 242 residues: Putative ABC transporter ATP-binding protein TTE0246 (242 aa).

Positions 5-242 (FELKNVSYFY…EKLLLKANLI (238 aa)) constitute an ABC transporter domain. An ATP-binding site is contributed by 38–45 (GANGSGKS).

The protein belongs to the ABC transporter superfamily.

It is found in the cell membrane. Functionally, probably part of an ABC transporter complex. Responsible for energy coupling to the transport system. This is Putative ABC transporter ATP-binding protein TTE0246 from Caldanaerobacter subterraneus subsp. tengcongensis (strain DSM 15242 / JCM 11007 / NBRC 100824 / MB4) (Thermoanaerobacter tengcongensis).